The following is a 98-amino-acid chain: Tax1-binding protein 3 (98 aa).

S2 is modified (N-acetylserine). A PDZ domain is found at 12–87 (VVQRVEIHKL…VVRLLVTRQS (76 aa)).

Interacts (via its PDZ domain) with GLS2. Interacts (via its PDZ domain) with RTKN (via the C-terminal region); this interaction facilitates Rho-mediated activation of the FOS serum response element (SRE). Interacts (via PDZ domain) with ARHGEF16. Interacts (via PDZ domain) with KCNJ4 (via C-terminus). Competes with LIN7A for KCNJ4 binding. Interacts (via its PDZ domain) with CTNNB1; this interaction inhibits the transcriptional activity of CTNNB1. Interacts with ADGRB2. In terms of tissue distribution, detected in kidney distal convoluted tubules (at protein level).

Its subcellular location is the cytoplasm. It is found in the nucleus. The protein resides in the cell membrane. In terms of biological role, may regulate a number of protein-protein interactions by competing for PDZ domain binding sites. Binds CTNNB1 and may thereby act as an inhibitor of the Wnt signaling pathway. Competes with LIN7A for KCNJ4 binding, and thereby promotes KCNJ4 internalization. May play a role in the Rho signaling pathway. This is Tax1-binding protein 3 from Rattus norvegicus (Rat).